Consider the following 104-residue polypeptide: DNA-directed RNA polymerase subunit omega (104 aa).

Residues 53-104 are disordered; sequence EIESGNVTIHPDPEGKREAVRRRIEEEKRRKEEEEKKIKEQIAKEKEDGEKI. A compositionally biased stretch (basic and acidic residues) spans 63-104; the sequence is PDPEGKREAVRRRIEEEKRRKEEEEKKIKEQIAKEKEDGEKI.

It belongs to the RNA polymerase subunit omega family. In terms of assembly, the RNAP catalytic core consists of 2 alpha, 1 beta, 1 beta' and 1 omega subunit. When a sigma factor is associated with the core the holoenzyme is formed, which can initiate transcription.

The enzyme catalyses RNA(n) + a ribonucleoside 5'-triphosphate = RNA(n+1) + diphosphate. Its function is as follows. Promotes RNA polymerase assembly. Latches the N- and C-terminal regions of the beta' subunit thereby facilitating its interaction with the beta and alpha subunits. This is DNA-directed RNA polymerase subunit omega from Streptococcus pneumoniae serotype 2 (strain D39 / NCTC 7466).